The primary structure comprises 66 residues: Large ribosomal subunit protein bL31 (66 aa).

The Zn(2+) site is built by C16, C18, C36, and C39.

Belongs to the bacterial ribosomal protein bL31 family. Type A subfamily. As to quaternary structure, part of the 50S ribosomal subunit. Zn(2+) serves as cofactor.

In terms of biological role, binds the 23S rRNA. This Natranaerobius thermophilus (strain ATCC BAA-1301 / DSM 18059 / JW/NM-WN-LF) protein is Large ribosomal subunit protein bL31.